Reading from the N-terminus, the 330-residue chain is Trans-1,2-dihydrobenzene-1,2-diol dehydrogenase (330 aa).

This sequence belongs to the Gfo/Idh/MocA family. In terms of assembly, homodimer.

It catalyses the reaction (1R,2R)-1,2-dihydrobenzene-1,2-diol + NADP(+) = catechol + NADPH + H(+). The enzyme catalyses D-xylose + NADP(+) = D-xylono-1,5-lactone + NADPH + H(+). The chain is Trans-1,2-dihydrobenzene-1,2-diol dehydrogenase (dhdh) from Xenopus tropicalis (Western clawed frog).